The chain runs to 1029 residues: Probable E3 ubiquitin protein ligase C167.07c (1029 aa).

The region spanning 46 to 75 is the IQ domain; the sequence is AENNSVAVQSLSRGFLARRKFKQDFRERWI. An HECT domain is found at 692–1029; that stretch reads FGKLLKGPIR…VRSGVGFGFS (338 aa). The active-site Glycyl thioester intermediate is the C997.

It is found in the cytoplasm. The protein localises to the nucleus. The enzyme catalyses S-ubiquitinyl-[E2 ubiquitin-conjugating enzyme]-L-cysteine + [acceptor protein]-L-lysine = [E2 ubiquitin-conjugating enzyme]-L-cysteine + N(6)-ubiquitinyl-[acceptor protein]-L-lysine.. In terms of biological role, probable E3 ubiquitin-protein ligase which mediates ubiquitination and subsequent proteasomal degradation of target proteins. In Schizosaccharomyces pombe (strain 972 / ATCC 24843) (Fission yeast), this protein is Probable E3 ubiquitin protein ligase C167.07c.